The chain runs to 806 residues: NADH:(hydroxy)cinnamate reductase subunit CrdB (806 aa).

Position 257 is an FMN phosphoryl serine (serine 257). FAD contacts are provided by alanine 310, glutamate 329, asparagine 337, threonine 338, glycine 342, glycine 343, and aspartate 576. The active-site Proton donor is the arginine 635. 4 residues coordinate FAD: histidine 742, glutamate 771, alanine 786, and leucine 787.

Belongs to the FAD-dependent oxidoreductase 2 family. FRD/SDH subfamily. NADH:(hydroxy)cinnamate reductase Crd is a heterodimer composed of CrdA and CrdB subunits, encoded by adjacent genes. It depends on FAD as a cofactor. Requires FMN as cofactor. In terms of processing, is flavinylated on Ser-257 by ApbE, encoded in a neighboring gene. Covalent attachment of FMN is essential for catalytic activity.

The enzyme catalyses 3-phenylpropanoate + NAD(+) = (E)-cinnamate + NADH + H(+). It catalyses the reaction 3-(3,4-dihydroxyphenyl)propanoate + NAD(+) = (E)-caffeate + NADH + H(+). The catalysed reaction is phloretate + NAD(+) = (E)-4-coumarate + NADH + H(+). It carries out the reaction dihydroferulate + NAD(+) = (E)-ferulate + NADH + H(+). With respect to regulation, is inactivated by molecular oxygen, allowing regulation of Crd activity by medium oxygen level. Component of the NADH:(hydroxy)cinnamate reductase Crd that catalyzes the reduction of the double bond in cinnamate, p-coumarate, caffeate, and ferulate under anaerobic conditions with NADH or methyl viologen as the electron donor. Is moderately active against acrylate and practically inactive against urocanate, fumarate, methacrylate and crotonate. CrdB is the catalytic subunit that binds substrates. Is likely involved in protecting V.ruber from (hydroxy)cinnamate poisoning. This Vibrio ruber (strain DSM 16370 / JCM 11486 / BCRC 17186 / CECT 7878 / LMG 23124 / VR1) protein is NADH:(hydroxy)cinnamate reductase subunit CrdB.